A 426-amino-acid chain; its full sequence is FK506-binding protein 3 (426 aa).

Disordered stretches follow at residues 37–143 and 171–314; these read SLDP…PKHQ and TGNY…KKKK. Composition is skewed to acidic residues over residues 65 to 94, 111 to 131, and 181 to 225; these read DYFEDDDDDEEEDDEEDELDDEEEEEEAEE, EDEEEDDEEEDDEDNDEDDVS, and QDEE…SEEE. Basic and acidic residues-rich tracts occupy residues 226 to 257, 264 to 278, and 287 to 311; these read GTPKIEEIVEEKEKVKESPKESKKRVAEESTS, KKDEKKSVQFSKELE, and VEKDNKKATPTKDKKETPVKDDGDK. One can recognise a PPIase FKBP-type domain in the interval 340–426; sequence GAKVGIRYIG…TFDIKLVSLK (87 aa).

It belongs to the FKBP-type PPIase family. FKBP3/4 subfamily.

The protein localises to the nucleus. Its subcellular location is the nucleolus. It catalyses the reaction [protein]-peptidylproline (omega=180) = [protein]-peptidylproline (omega=0). Its activity is regulated as follows. Inhibited by both FK506 and rapamycin. Functionally, PPIases accelerate the folding of proteins. It catalyzes the cis-trans isomerization of proline imidic peptide bonds in oligopeptides. The polypeptide is FK506-binding protein 3 (FPR3) (Candida albicans (strain SC5314 / ATCC MYA-2876) (Yeast)).